Reading from the N-terminus, the 304-residue chain is E3 ubiquitin-protein ligase CHIP (304 aa).

A compositionally biased stretch (basic and acidic residues) spans 1–10 (MKGKEEKEGG). The segment at 1–30 (MKGKEEKEGGARLGTGGGGSPDKSPSAQEL) is disordered. Residue lysine 2 forms a Glycyl lysine isopeptide (Lys-Gly) (interchain with G-Cter in ubiquitin) linkage. Gly residues predominate over residues 11–20 (ARLGTGGGGS). A Phosphoserine modification is found at serine 20. Residue lysine 23 forms a Glycyl lysine isopeptide (Lys-Gly) (interchain with G-Cter in ubiquitin) linkage. Phosphoserine is present on residues serine 24 and serine 26. 3 TPR repeats span residues 27 to 60 (AQELKEQGNRLFVGRKYPEAAACYGRAITRNPLV), 61 to 94 (AVYYTNRALCYLKMQQPEQALADCRRALELDGQS), and 96 to 128 (KAHFFLGQCQLEMESYDEAIANLQRAYSLAKEQ). Residues 102–201 (GQCQLEMESY…GHIRAQQACI (100 aa)) are required for interaction with MAPK7. Residues 143-197 (AKKKRWNSIEERRIHQESELHSYLTRLIAAERERELEECQRNHEGHEDDGHIRAQ) form a required for interaction with and ubiquitination of MYOCD region. The tract at residues 144 to 198 (KKKRWNSIEERRIHQESELHSYLTRLIAAERERELEECQRNHEGHEDDGHIRAQQ) is required for interaction with FOXO1. Residues 144 to 304 (KKKRWNSIEE…ISENGWVEDY (161 aa)) are required for ubiquitination of FOXO1. At serine 150 the chain carries Phosphoserine. Glycyl lysine isopeptide (Lys-Gly) (interchain with G-Cter in ubiquitin) cross-links involve residues lysine 222 and lysine 256. In terms of domain architecture, U-box spans 227 to 301 (DIPDYLCGKI…DAFISENGWV (75 aa)). At serine 274 the chain carries Phosphoserine.

Homodimer. Interacts with BAG2, and with the E2 ubiquitin conjugating enzymes UBE2D1, UBE2D2 and UBE2D3. Detected in a ternary complex containing STUB1, HSPA1A and HSPBP1. Part of a complex composed of STUB1/CHIP, VCP/p97, CHRNA3, and UBXN2A that modulates the ubiquitination and endoplasmic reticulum-associated degradation (ERAD) of CHRNA3. Within the complex UBXN2A acts as a scaffold protein required for the interaction of CHRNA3 with VCP/p97, this interaction also inhibits CHRNA3 ubiquitination by STUB1/CHIP and subsequently ERAD. Interacts with MKKS. Interacts with DNAAF4. Interacts (via the U-box domain) with the UBE2V2-UBE2N heterodimer; the complex has a specific 'Lys-63'-linked polyubiquitination activity. Interacts (when monoubiquitinated) with ATXN3. Interacts with UBE2W. Interacts with DNAJB6. Interacts with FLCN and HSP90AA1. Interacts with HSP90. Interacts with UBE2N and UBE2V1. Interacts (via TPR repeats) with HSPA8 (via C-terminus). Interacts (via TPR repeats) with HSPA1A (via C-terminus). Interacts with the non-acetylated form of HSPA1A and HSPA1B. Interacts with SMAD3 and HSP90AB1. Interacts with UBE4B. Interacts with PRMT5. Interacts with MYOCD (via C-terminus). Interacts with FOXO1 (when phosphorylated on 'Ser-253'). Interacts with MAPK7/ERK5; the interaction is enhanced in the presence of IGF1 or MAP2K5 and promotes STUB1/CHIP E3 ligase activity. Interacts with and ubiquitinates ESR1; the interaction is promoted in the absence of estradiol (17-beta-estradiol/E2). Interacts with ESR2. Interacts with and ubiquitinates NFATC3; HSPA1A/HSP70 is required as a co-chaperone. In macrophages, interacts with PAQR3; the interaction promotes PPARG poylubiquitination and STUB1-mediated degradation. Component of the chaperone-assisted selective autophagy (CASA) complex consisting of BAG3, HSPA8/HSC70, HSPB8 and STUB1/CHIP. Post-translationally, auto-ubiquitinated; mediated by UBE2D1 and UBE2D2 and enhanced in the presence of MAP2K5. Monoubiquitinated at Lys-2 following cell stress by UBE2W, promoting the interaction with ATXN3. In terms of tissue distribution, expressed in the brain.

The protein localises to the cytoplasm. It is found in the nucleus. Its subcellular location is the mitochondrion. It catalyses the reaction S-ubiquitinyl-[E2 ubiquitin-conjugating enzyme]-L-cysteine + [acceptor protein]-L-lysine = [E2 ubiquitin-conjugating enzyme]-L-cysteine + N(6)-ubiquitinyl-[acceptor protein]-L-lysine.. Its pathway is protein modification; protein ubiquitination. Its function is as follows. E3 ubiquitin-protein ligase which targets misfolded chaperone substrates towards proteasomal degradation. Plays a role in the maintenance of mitochondrial morphology and promotes mitophagic removal of dysfunctional mitochondria; thereby acts as a protector against apoptosis in response to cellular stress. Negatively regulates vascular smooth muscle contraction, via degradation of the transcriptional activator MYOCD and subsequent loss of transcription of genes involved in vascular smooth muscle contraction. Promotes survival and proliferation of cardiac smooth muscle cells via ubiquitination and degradation of FOXO1, resulting in subsequent repression of FOXO1-mediated transcription of pro-apoptotic genes. Ubiquitinates ICER-type isoforms of CREM and targets them for proteasomal degradation, thereby acts as a positive effector of MAPK/ERK-mediated inhibition of apoptosis in cardiomyocytes. Inhibits lipopolysaccharide-induced apoptosis and hypertrophy in cardiomyocytes, via ubiquitination and subsequent proteasomal degradation of NFATC3. Collaborates with ATXN3 in the degradation of misfolded chaperone substrates: ATXN3 restricting the length of ubiquitin chain attached to STUB1/CHIP substrates and preventing further chain extension. Ubiquitinates NOS1 in concert with Hsp70 and Hsp40. Modulates the activity of several chaperone complexes, including Hsp70, Hsc70 and Hsp90. Ubiquitinates CHRNA3 targeting it for endoplasmic reticulum-associated degradation in cortical neurons, as part of the STUB1-VCP-UBXN2A complex. Ubiquitinates and promotes ESR1 proteasomal degradation in response to age-related circulating estradiol (17-beta-estradiol/E2) decline, thereby promotes neuronal apoptosis in response to ischemic reperfusion injury. Mediates transfer of non-canonical short ubiquitin chains to HSPA8 that have no effect on HSPA8 degradation. Mediates polyubiquitination of DNA polymerase beta (POLB) at 'Lys-41', 'Lys-61' and 'Lys-81', thereby playing a role in base-excision repair: catalyzes polyubiquitination by amplifying the HUWE1/ARF-BP1-dependent monoubiquitination and leading to POLB-degradation by the proteasome. Mediates polyubiquitination of CYP3A4. Ubiquitinates EPHA2 and may regulate the receptor stability and activity through proteasomal degradation. Acts as a co-chaperone for HSPA1A and HSPA1B chaperone proteins and promotes ubiquitin-mediated protein degradation. Negatively regulates the suppressive function of regulatory T-cells (Treg) during inflammation by mediating the ubiquitination and degradation of FOXP3 in a HSPA1A/B-dependent manner. Catalyzes monoubiquitination of SIRT6, preventing its degradation by the proteasome. Likely mediates polyubiquitination and down-regulates plasma membrane expression of PD-L1/CD274, an immune inhibitory ligand critical for immune tolerance to self and antitumor immunity. Negatively regulates TGF-beta signaling by modulating the basal level of SMAD3 via ubiquitin-mediated degradation. Plays a role in the degradation of TP53. Mediates ubiquitination of RIPK3 leading to its subsequent proteasome-dependent degradation. May regulate myosin assembly in striated muscles together with UBE4B and VCP/p97 by targeting myosin chaperone UNC45B for proteasomal degradation. Ubiquitinates PPARG in macrophages playing a role in M2 macrophages polarization and angiogenesis. The polypeptide is E3 ubiquitin-protein ligase CHIP (Mus musculus (Mouse)).